The chain runs to 172 residues: Translation initiation factor IF-3 (172 aa).

Belongs to the IF-3 family. As to quaternary structure, monomer.

The protein resides in the cytoplasm. In terms of biological role, IF-3 binds to the 30S ribosomal subunit and shifts the equilibrium between 70S ribosomes and their 50S and 30S subunits in favor of the free subunits, thus enhancing the availability of 30S subunits on which protein synthesis initiation begins. The sequence is that of Translation initiation factor IF-3 from Geobacillus stearothermophilus (Bacillus stearothermophilus).